Here is a 347-residue protein sequence, read N- to C-terminus: tRNA N6-adenosine threonylcarbamoyltransferase (347 aa).

Positions 115 and 119 each coordinate Fe cation. Substrate is bound by residues 137–141 (LASGG), Asp-170, Gly-183, and Asn-281. A Fe cation-binding site is contributed by Asp-309.

This sequence belongs to the KAE1 / TsaD family. Fe(2+) is required as a cofactor.

It is found in the cytoplasm. It catalyses the reaction L-threonylcarbamoyladenylate + adenosine(37) in tRNA = N(6)-L-threonylcarbamoyladenosine(37) in tRNA + AMP + H(+). Its function is as follows. Required for the formation of a threonylcarbamoyl group on adenosine at position 37 (t(6)A37) in tRNAs that read codons beginning with adenine. Is involved in the transfer of the threonylcarbamoyl moiety of threonylcarbamoyl-AMP (TC-AMP) to the N6 group of A37, together with TsaE and TsaB. TsaD likely plays a direct catalytic role in this reaction. The sequence is that of tRNA N6-adenosine threonylcarbamoyltransferase from Methylorubrum populi (strain ATCC BAA-705 / NCIMB 13946 / BJ001) (Methylobacterium populi).